We begin with the raw amino-acid sequence, 263 residues long: Zinc import ATP-binding protein ZnuC (263 aa).

Positions 11–226 (VELKNINVVF…PTFIHFFGDQ (216 aa)) constitute an ABC transporter domain. 43-50 (GPNGGGKS) contributes to the ATP binding site.

This sequence belongs to the ABC transporter superfamily. Zinc importer (TC 3.A.1.15.5) family. In terms of assembly, the complex is composed of two ATP-binding proteins (ZnuC), two transmembrane proteins (ZnuB) and a solute-binding protein (ZnuA).

Its subcellular location is the cell inner membrane. The catalysed reaction is Zn(2+)(out) + ATP(in) + H2O(in) = Zn(2+)(in) + ADP(in) + phosphate(in) + H(+)(in). Its function is as follows. Part of the ABC transporter complex ZnuABC involved in zinc import. Responsible for energy coupling to the transport system. This Pasteurella multocida (strain Pm70) protein is Zinc import ATP-binding protein ZnuC.